The following is a 168-amino-acid chain: Dual-action ribosomal maturation protein DarP (168 aa).

Belongs to the DarP family.

The protein localises to the cytoplasm. Its function is as follows. Member of a network of 50S ribosomal subunit biogenesis factors which assembles along the 30S-50S interface, preventing incorrect 23S rRNA structures from forming. Promotes peptidyl transferase center (PTC) maturation. The protein is Dual-action ribosomal maturation protein DarP of Neisseria meningitidis serogroup B (strain ATCC BAA-335 / MC58).